Reading from the N-terminus, the 542-residue chain is ATP synthase subunit beta (542 aa).

The span at 1–50 shows a compositional bias: low complexity; the sequence is MAKTPAKAPAAAAKPAAVKKPAAPKAAAAPKAAAVATPAAKKPAAPKAAP. The tract at residues 1–61 is disordered; sequence MAKTPAKAPA…SKVAGTREKP (61 aa). Residue 216-223 coordinates ATP; it reads GGAGVGKT.

This sequence belongs to the ATPase alpha/beta chains family. F-type ATPases have 2 components, CF(1) - the catalytic core - and CF(0) - the membrane proton channel. CF(1) has five subunits: alpha(3), beta(3), gamma(1), delta(1), epsilon(1). CF(0) has three main subunits: a(1), b(2) and c(9-12). The alpha and beta chains form an alternating ring which encloses part of the gamma chain. CF(1) is attached to CF(0) by a central stalk formed by the gamma and epsilon chains, while a peripheral stalk is formed by the delta and b chains.

The protein resides in the cell inner membrane. The catalysed reaction is ATP + H2O + 4 H(+)(in) = ADP + phosphate + 5 H(+)(out). Functionally, produces ATP from ADP in the presence of a proton gradient across the membrane. The catalytic sites are hosted primarily by the beta subunits. The protein is ATP synthase subunit beta of Caulobacter sp. (strain K31).